Reading from the N-terminus, the 77-residue chain is Pi/alpha-stichotoxin-Hmg5b (77 aa).

Residues 1-21 (MDYQRLLFLFAVAMVITTTVA) form the signal peptide. Positions 22 to 34 (LPKDTALMDGQLQ) are excised as a propeptide. Disulfide bonds link Cys40–Cys73, Cys42–Cys66, and Cys56–Cys74. Met52 carries the post-translational modification Methionine sulfoxide; partial.

The protein belongs to the sea anemone type 3 (BDS) potassium channel toxin family. Toxin occurs in two forms in the mucus, Hmg 1b-2 which is not oxidized and Hmg 1b-2 MetOx which is oxidized at Met-52.

The protein resides in the secreted. Its subcellular location is the nematocyst. Its function is as follows. The non-oxidized toxin is remarkably non-selective with activity on many different ion channels. Weakly and reversibly inhibits rat and human homomeric ASIC1 (isoform ASIC1a) (IC(50)=4.8 uM, and IC(50)=14.6 uM), and ASIC3 (IC(50)=15.9 uM). Molecular modeling interaction with ASIC1a suggests that this peptide hinders the collapse of acidic pockets and stabilizes nonconducting channels state. It activates several potassium channels including Kv1.1/KCNA1, Kv1.2/KCNA2, and drosophila Shaker IR. It moderately to potently inhibits potassium channels including Kv1.3/KCNA3, Kv1.4/KCNA4, Kv1.5/KCNA5, Kv1.6/KCNA6, Kv2.1/KCNB1, Kv4.2/KCND2, Kv7.1/KCNQ1, Kv7.2/Kv7.3 (KCNQ2/KCNQ3), Kv7.4/KCNQ4, hERG/KCNH2, and C.elegans QKT1. On sodium channels, it moderately to potently inhibits Nav1.1/SCN1A, Nav1.2/SCN2A, Nav1.3/SCN3A, Nav1.4/SCN4A, Nav1.5/SCN5A, Nav1.6/SCN8A, Nav1.7/SCN9A, Nav1.8/SCN10A, and B.germanica BgNav. It also moderately to potently inhibits Cav3.1/CACNA1G, Cav3.2/CACNA1H, and Cav3.3/CACNA1I. Significant shifts in the voltage-current relationship are observed on Kv and Nav, depending on the channel isoform, whereas the toxin does not seem to modulate the voltage-sensor domains of Cav channels, acting mainly as a pore blocker. Does not activate nicotinic acetylcholine receptors (nAChR), but potentiates ACh-elicited current of human alpha-7/CHRNA7 nAChR. Is also able to bind T.californica muscle-type nAChRs. In vivo, causes an excitatory effect in mice behavior. Also shows antihyperalgesic and analgesic activity in the acid-induced muscle pain mice model, and weak anti-inflammatory effect in models of acute local inflammation. In terms of biological role, forms an oxidized toxin derivative (Hmg 1b-2 MetOx). Able to bind T.californica muscle-type nAChRs (alpha-1-beta-1-delta-epsilon (CHRNA1-CHRNB1-CHRND-CHRNE)). The polypeptide is Pi/alpha-stichotoxin-Hmg5b (Heteractis magnifica (Magnificent sea anemone)).